Consider the following 2467-residue polypeptide: Transcription factor TFIIIB component B'' homolog (2467 aa).

2 disordered regions span residues 1–145 (MFRR…RYRI) and 159–243 (LRKE…VDDG). The segment at 1 to 301 (MFRRARLSVK…TYSSFRKNYY (301 aa)) is interaction with ZBTB43. The segment covering 81-92 (AAESSTLSSASS) has biased composition (low complexity). Polar residues predominate over residues 99-118 (SSTSSLVQPSGSAPSQSRPL). 2 stretches are compositionally biased toward basic and acidic residues: residues 133 to 144 (AKEKQPCSDRYR) and 177 to 186 (RPPDRSKMTM). Residues 144-177 (RIYKARKLREMLKEELRKEKKQWKNKFSTNESQR) adopt a coiled-coil conformation. A compositionally biased stretch (acidic residues) spans 231–242 (NDNEDVEEEVDD). The Myb-like domain occupies 297–347 (RKNYYSKPWSNKETDMFFLAISMVGTDFSMIGQLFPHRARIEIKNKFKREE). Residues 357–472 (AFQEKRPFDF…QEKKRRRNQG (116 aa)) are required for phosphorylation by CSNK2A1. Disordered stretches follow at residues 380–513 (EEKR…ECNK), 576–720 (SADM…VKAA), 748–844 (PPQT…PATW), 866–893 (LTATASTKDSESDVKDSGRNDTASNAEM), 971–1200 (LQEN…SSKI), 1231–1270 (LGRHETDQGMPLPDALERFSDTNLSKPLPQEQQPLQVKPA), 1318–1388 (DSDQ…LVPI), 1409–1448 (LPVRGRLQRPRPNVQKARQRQIVEKGEARDIAKNEGPELQ), 1527–1561 (KAKPNLGGARRKDEQPGVEKGRTDESTALTAEDHL), 1592–1706 (IHSE…RASK), 1902–1926 (IVSKEQSNRDAAVEEEAVEETLPTR), 1977–2014 (IQRETEGDDSKAVELEDKSHAPVTAAETKEEEQSQCVG), 2058–2083 (LDSGQSFGESAAKEALKETPKGSDVP), 2179–2206 (LVVQDAPSLSPSRSGSSEKPPANLDLTS), 2260–2290 (GIFPTSESTHATSKPQKEHSEPTDTGSSGSL), and 2304–2449 (LPQS…EEVT). The stretch at 458-487 (EQDQNQEKKRRRNQGEANKQEATNLLERVL) forms a coiled coil. Residues 649–660 (AAEKNHMEKETM) are compositionally biased toward basic and acidic residues. Over residues 809–824 (RFQKPKPNTGRRRRRI) the composition is skewed to basic residues. Composition is skewed to basic and acidic residues over residues 873–884 (KDSESDVKDSGR), 992–1002 (TGKDLAMKEST), 1009–1041 (TEEREAYSEETERQEKISALIKDAEEAKARGEM), 1089–1098 (EGKELNLRET), 1112–1130 (EKTDIEETNGDPKETERES), and 1150–1170 (DLGKPEKIDVAPREREPEEHS). 4 stretches are compositionally biased toward polar residues: residues 1180–1200 (LSSSDGSTGSPQDKVNISSKI), 1251–1265 (DTNLSKPLPQEQQPL), 1318–1330 (DSDQAALSPQHNV), and 1364–1382 (PPNSSEPKEGSQLTPNQEN). Basic and acidic residues-rich tracts occupy residues 1429–1448 (QIVEKGEARDIAKNEGPELQ), 1536–1561 (RRKDEQPGVEKGRTDESTALTAEDHL), and 1592–1603 (IHSEESGSDRND). Composition is skewed to polar residues over residues 1621-1642 (EQPTSLGLEEQSLSKQIRSSCP) and 1650-1665 (YPKTVSSRRTPLSSAS). A compositionally biased stretch (basic residues) spans 1688 to 1697 (RGSKRIRGKT). Composition is skewed to basic and acidic residues over residues 1902–1913 (IVSKEQSNRDAA), 1977–1996 (IQRETEGDDSKAVELEDKSH), and 2068–2078 (AAKEALKETPK). Low complexity predominate over residues 2185–2199 (PSLSPSRSGSSEKPP). Composition is skewed to polar residues over residues 2262-2273 (FPTSESTHATSK), 2319-2334 (PASNSEQRDIVTSSSK), and 2414-2429 (TAGSPESSAAQVSSDQ).

In terms of assembly, component of TFIIIB complex. The TFIIIB complex has two activities, alpha and beta. The TFIIIB-alpha and TFIIIB-beta activities are required for transcription of genes with TFIIIC-bound internal promoters and PSE transcription factor-bound external promoters, respectively. The TFIIIB-alpha activity complex is composed of TBP, BDP1, and a complex containing both BRF2 and at least four stably associated proteins; YY1 facilitates the formation of TFIIIB-alpha activity complex. The TFIIIB-beta activity complex is composed of TBP, BDP1, and BRF1. Interacts with BRF1; this interaction diminishes during mitosis resulting in the release of BDP1 from chromosomal templates. Component of TFIIIC complex. The TFIIIC complex has two activities, C1 and C2. The TFIIIC2 activity complex is only required for transcription of the 'classical' pol III genes whereas the TFIIIC1 activity complex is required for transcription of all pol III genes. The TFIIIC1 activity complex is composed at least of BDP1. Interacts with ZBTB43. In terms of processing, phosphorylated by CSNK2A1 during mitosis, resulting in its release from chromatin and suppression of polymerase III transcription. In terms of tissue distribution, expressed in the cochlea, particularly in the spiral ligament, the capillaries of the stria vascularis and the basilar membrane.

Its subcellular location is the nucleus. Its function is as follows. General activator of RNA polymerase III transcription. Requires for transcription from all three types of polymerase III promoters. Requires for transcription of genes with internal promoter elements and with promoter elements upstream of the initiation site. The sequence is that of Transcription factor TFIIIB component B'' homolog (Bdp1) from Mus musculus (Mouse).